The primary structure comprises 563 residues: MKKFNIIAAINNDSIIGVKEYGTFSMPWPYLKDDMNHFRKITTDTGSIESGVNAIIVGFNTWQTLPSSYRNIRSRFNIVISRDDETDGQFHKYVKTFDEAIEFASSLTNLNEIFVIGGGVIYDLALKHKLLDKLYLTHVGSNYPIDDNVEKVVHFPLTWSKIEKMCDSNFLELDSEISKHDIGKNILLRFQEYSVKKELYWAIEYLKKNTSLDNKGIIGDKGATGSKGYSLEQHDYYSTEYFWNFYEFITRKVFDLFNSSNEISIPSEECPENQYIELVKTIMEKGIVKQTRNSITKSIFGYQLKYDLSKGYPIQTIKRSYPKAIFEELMWMIRGQTDVSILQKKGVHVWDKNSSKDFLSKYNLPYEEGDIGPGYGFQMRYWGAEYTDCKTSYQGQGIDQLNKCIESIQNNPHDRRIMINLWNCSDLDKMALAPCHFCYMFGVDLYEVPTTSGKKGRLNCHLVQRSWDVLLGWNTTTAALLTYLIANHCDLDPGILVHSISDAHIYQSHIDSGAISQLLQRKCRKFPNLVIRNKKEKIDDYEFDDLIIENYYPCPSISAEMIA.

One can recognise a DHFR domain in the interval 3–195; it reads KFNIIAAINN…ILLRFQEYSV (193 aa). Residue 117-124 coordinates NADP(+); sequence GGGVIYDL. The segment at 275–563 is thymidylate synthase; the sequence is YIELVKTIME…CPSISAEMIA (289 aa). Arg292 contributes to the dUMP binding site. Cys435 is an active-site residue. Residues His436, 464–468, Asn474, and 504–506 each bind dUMP; these read QRSWD and HIY.

It in the N-terminal section; belongs to the dihydrofolate reductase family. The protein in the C-terminal section; belongs to the thymidylate synthase family.

It catalyses the reaction (6S)-5,6,7,8-tetrahydrofolate + NADP(+) = 7,8-dihydrofolate + NADPH + H(+). It carries out the reaction dUMP + (6R)-5,10-methylene-5,6,7,8-tetrahydrofolate = 7,8-dihydrofolate + dTMP. The protein operates within cofactor biosynthesis; tetrahydrofolate biosynthesis; 5,6,7,8-tetrahydrofolate from 7,8-dihydrofolate: step 1/1. Bifunctional enzyme. Involved in de novo dTMP biosynthesis. Key enzyme in folate metabolism. Catalyzes an essential reaction for de novo glycine and purine synthesis, DNA precursor synthesis, and for the conversion of dUMP to dTMP. The sequence is that of Bifunctional dihydrofolate reductase-thymidylate synthase from Acanthamoeba polyphaga mimivirus (APMV).